We begin with the raw amino-acid sequence, 176 residues long: NAD(P)H-quinone oxidoreductase subunit 6, chloroplastic (176 aa).

The next 5 helical transmembrane spans lie at 10–30, 33–53, 61–81, 92–112, and 152–172; these read FLLV…VLLT, IYSA…HIPA, AQLL…VMFM, LWTV…VSLI, and FFLP…GAIA.

Belongs to the complex I subunit 6 family. In terms of assembly, NDH is composed of at least 16 different subunits, 5 of which are encoded in the nucleus.

The protein resides in the plastid. Its subcellular location is the chloroplast thylakoid membrane. The enzyme catalyses a plastoquinone + NADH + (n+1) H(+)(in) = a plastoquinol + NAD(+) + n H(+)(out). It carries out the reaction a plastoquinone + NADPH + (n+1) H(+)(in) = a plastoquinol + NADP(+) + n H(+)(out). NDH shuttles electrons from NAD(P)H:plastoquinone, via FMN and iron-sulfur (Fe-S) centers, to quinones in the photosynthetic chain and possibly in a chloroplast respiratory chain. The immediate electron acceptor for the enzyme in this species is believed to be plastoquinone. Couples the redox reaction to proton translocation, and thus conserves the redox energy in a proton gradient. The chain is NAD(P)H-quinone oxidoreductase subunit 6, chloroplastic (ndhG) from Nandina domestica (Heavenly bamboo).